We begin with the raw amino-acid sequence, 219 residues long: PKHD-type hydroxylase Plav_0037 (219 aa).

In terms of domain architecture, Fe2OG dioxygenase spans 78 to 172 (NFIRILLSRY…RRAAVGWIRS (95 aa)). His-96, Asp-98, and His-153 together coordinate Fe cation. Arg-163 is a binding site for 2-oxoglutarate.

Fe(2+) is required as a cofactor. The cofactor is L-ascorbate.

This is PKHD-type hydroxylase Plav_0037 from Parvibaculum lavamentivorans (strain DS-1 / DSM 13023 / NCIMB 13966).